The chain runs to 270 residues: Eukaryotic translation initiation factor 2 subunit beta (270 aa).

The interval 1–38 (MADEEQMERKEEATEIAPFDPTKKKKKKKVVIQDPADE) is disordered.

This sequence belongs to the eIF-2-beta/eIF-5 family. As to quaternary structure, eukaryotic translation initiation factor 2 eIF2 is a heterotrimeric complex composed of an alpha, a beta and a gamma subunit.

Its subcellular location is the cytoplasm. The protein localises to the cytosol. Its function is as follows. Component of the eIF2 complex that functions in the early steps of protein synthesis by forming a ternary complex with GTP and initiator tRNA. This complex binds to a 40S ribosomal subunit, followed by mRNA binding to form a 43S pre-initiation complex (43S PIC). Junction of the 60S ribosomal subunit to form the 80S initiation complex is preceded by hydrolysis of the GTP bound to eIF2 and release of an eIF2-GDP binary complex. In order for eIF2 to recycle and catalyze another round of initiation, the GDP bound to eIF2 must exchange with GTP by way of a reaction catalyzed by eIF2B. This chain is Eukaryotic translation initiation factor 2 subunit beta, found in Triticum aestivum (Wheat).